The chain runs to 127 residues: Glycine cleavage system H protein (127 aa).

Residues 22–104 (EVVIGITHFA…YEGAWMVKVE (83 aa)) enclose the Lipoyl-binding domain. Lysine 63 carries the N6-lipoyllysine modification.

This sequence belongs to the GcvH family. As to quaternary structure, the glycine cleavage system is composed of four proteins: P, T, L and H. It depends on (R)-lipoate as a cofactor.

The glycine cleavage system catalyzes the degradation of glycine. The H protein shuttles the methylamine group of glycine from the P protein to the T protein. Functionally, is also involved in protein lipoylation via its role as an octanoyl/lipoyl carrier protein intermediate. The chain is Glycine cleavage system H protein from Bacillus cereus (strain ZK / E33L).